The sequence spans 339 residues: Cathepsin B (339 aa).

Positions 1-17 are cleaved as a signal peptide; sequence MWQLWASLCCLLVLANA. A propeptide spans 18–79 (activation peptide); that stretch reads RSRPSFHPLS…QRVMFTEDLK (62 aa). Cystine bridges form between cysteine 93/cysteine 122, cysteine 105/cysteine 150, cysteine 141/cysteine 207, cysteine 142/cysteine 146, cysteine 179/cysteine 211, and cysteine 187/cysteine 198. Residue cysteine 108 is part of the active site. Residue asparagine 192 is glycosylated (N-linked (GlcNAc...) asparagine). Lysine 220 carries the N6-acetyllysine modification. Residues histidine 278 and asparagine 298 contribute to the active site. The propeptide occupies 334–339; it reads QYWEKI.

The protein belongs to the peptidase C1 family. In terms of assembly, dimer of a heavy chain and a light chain cross-linked by a disulfide bond. Interacts with SRPX2. Directly interacts with SHKBP1. In terms of tissue distribution, expressed in the stratum spinosum of the epidermis. Weak expression is detected in the stratum granulosum.

It is found in the lysosome. The protein resides in the melanosome. Its subcellular location is the secreted. It localises to the extracellular space. The protein localises to the apical cell membrane. It catalyses the reaction Hydrolysis of proteins with broad specificity for peptide bonds. Preferentially cleaves -Arg-Arg-|-Xaa bonds in small molecule substrates (thus differing from cathepsin L). In addition to being an endopeptidase, shows peptidyl-dipeptidase activity, liberating C-terminal dipeptides.. Its activity is regulated as follows. Inhibited by leupeptin. In terms of biological role, thiol protease which is believed to participate in intracellular degradation and turnover of proteins. Cleaves matrix extracellular phosphoglycoprotein MEPE. Involved in the solubilization of cross-linked TG/thyroglobulin in the thyroid follicle lumen. Has also been implicated in tumor invasion and metastasis. This is Cathepsin B (CTSB) from Homo sapiens (Human).